The chain runs to 896 residues: Alanine--tRNA ligase (896 aa).

Residues His-574, His-578, Cys-677, and His-681 each contribute to the Zn(2+) site.

Belongs to the class-II aminoacyl-tRNA synthetase family. Requires Zn(2+) as cofactor.

It localises to the cytoplasm. The enzyme catalyses tRNA(Ala) + L-alanine + ATP = L-alanyl-tRNA(Ala) + AMP + diphosphate. In terms of biological role, catalyzes the attachment of alanine to tRNA(Ala) in a two-step reaction: alanine is first activated by ATP to form Ala-AMP and then transferred to the acceptor end of tRNA(Ala). Also edits incorrectly charged Ser-tRNA(Ala) and Gly-tRNA(Ala) via its editing domain. The protein is Alanine--tRNA ligase of Mycoplasma capricolum subsp. capricolum (strain California kid / ATCC 27343 / NCTC 10154).